Reading from the N-terminus, the 397-residue chain is Proteasome-activating nucleotidase (397 aa).

Positions 15–58 (DYVTFLKRRIRQLELQVRTLEADKERLERELSRLRMEMSRLRQP) form a coiled coil. ATP is bound by residues 182–187 (GCGKTL) and His321. A docks into pockets in the proteasome alpha-ring to cause gate opening region spans residues 395 to 397 (MYG).

The protein belongs to the AAA ATPase family. As to quaternary structure, homohexamer. The hexameric complex has a two-ring architecture resembling a top hat that caps the 20S proteasome core at one or both ends. Upon ATP-binding, the C-terminus of PAN interacts with the alpha-rings of the proteasome core by binding to the intersubunit pockets.

The protein resides in the cytoplasm. ATPase which is responsible for recognizing, binding, unfolding and translocation of substrate proteins into the archaeal 20S proteasome core particle. Is essential for opening the gate of the 20S proteasome via an interaction with its C-terminus, thereby allowing substrate entry and access to the site of proteolysis. Thus, the C-termini of the proteasomal ATPase function like a 'key in a lock' to induce gate opening and therefore regulate proteolysis. Unfolding activity requires energy from ATP hydrolysis, whereas ATP binding alone promotes ATPase-20S proteasome association which triggers gate opening, and supports translocation of unfolded substrates. This is Proteasome-activating nucleotidase from Thermococcus kodakarensis (strain ATCC BAA-918 / JCM 12380 / KOD1) (Pyrococcus kodakaraensis (strain KOD1)).